Consider the following 295-residue polypeptide: Ankyrin repeat and SOCS box protein 17 (295 aa).

One copy of the ANK repeat lies at 146-176 (SGITPLFYVAQTRQSNIFKILLQYGILEREK). An SOCS box domain is found at 232-295 (LGRHPIISNW…RLQNYLNLEI (64 aa)).

This sequence belongs to the ankyrin SOCS box (ASB) family. Specifically expressed in testis. Not detected in other tissues tested.

The protein operates within protein modification; protein ubiquitination. In terms of biological role, may be a substrate-recognition component of a SCF-like ECS (Elongin-Cullin-SOCS-box protein) E3 ubiquitin-protein ligase complex which mediates the ubiquitination and subsequent proteasomal degradation of target proteins. The polypeptide is Ankyrin repeat and SOCS box protein 17 (ASB17) (Homo sapiens (Human)).